Here is a 124-residue protein sequence, read N- to C-terminus: Putative membrane protein insertion efficiency factor (124 aa).

Residues 1–24 (MHDPHGHAHTVRPPGRGRNWPGPW) form a disordered region. The segment covering 12–24 (RPPGRGRNWPGPW) has biased composition (low complexity).

The protein belongs to the UPF0161 family.

It is found in the cell inner membrane. In terms of biological role, could be involved in insertion of integral membrane proteins into the membrane. The protein is Putative membrane protein insertion efficiency factor of Mesorhizobium japonicum (strain LMG 29417 / CECT 9101 / MAFF 303099) (Mesorhizobium loti (strain MAFF 303099)).